A 314-amino-acid polypeptide reads, in one-letter code: Pectin lyase (314 aa).

Arginine 202 is a catalytic residue.

This sequence belongs to the polysaccharide lyase 1 family.

The enzyme catalyses Eliminative cleavage of (1-&gt;4)-alpha-D-galacturonan methyl ester to give oligosaccharides with 4-deoxy-6-O-methyl-alpha-D-galact-4-enuronosyl groups at their non-reducing ends.. This is Pectin lyase (pnl) from Pectobacterium carotovorum (Erwinia carotovora).